A 140-amino-acid polypeptide reads, in one-letter code: Large ribosomal subunit protein bL17 (140 aa).

This sequence belongs to the bacterial ribosomal protein bL17 family. In terms of assembly, part of the 50S ribosomal subunit. Contacts protein L32.

The polypeptide is Large ribosomal subunit protein bL17 (Ruegeria pomeroyi (strain ATCC 700808 / DSM 15171 / DSS-3) (Silicibacter pomeroyi)).